An 861-amino-acid chain; its full sequence is Leucine--tRNA ligase (861 aa).

The 'HIGH' region signature appears at 42 to 52 (PYPSGRIHMGH). Residues 623–627 (KMSKS) carry the 'KMSKS' region motif. Lys-626 is a binding site for ATP.

It belongs to the class-I aminoacyl-tRNA synthetase family.

It is found in the cytoplasm. The enzyme catalyses tRNA(Leu) + L-leucine + ATP = L-leucyl-tRNA(Leu) + AMP + diphosphate. The chain is Leucine--tRNA ligase from Caulobacter sp. (strain K31).